A 236-amino-acid polypeptide reads, in one-letter code: Pyridoxine 5'-phosphate synthase (236 aa).

Residue Asn6 participates in 3-amino-2-oxopropyl phosphate binding. 8–9 (DH) contacts 1-deoxy-D-xylulose 5-phosphate. Arg17 lines the 3-amino-2-oxopropyl phosphate pocket. The active-site Proton acceptor is the His42. Arg44 and His49 together coordinate 1-deoxy-D-xylulose 5-phosphate. Glu69 functions as the Proton acceptor in the catalytic mechanism. Position 99 (Thr99) interacts with 1-deoxy-D-xylulose 5-phosphate. Catalysis depends on His190, which acts as the Proton donor. 3-amino-2-oxopropyl phosphate contacts are provided by residues Gly191 and 212–213 (GH).

Belongs to the PNP synthase family. In terms of assembly, homooctamer; tetramer of dimers.

It localises to the cytoplasm. The catalysed reaction is 3-amino-2-oxopropyl phosphate + 1-deoxy-D-xylulose 5-phosphate = pyridoxine 5'-phosphate + phosphate + 2 H2O + H(+). The protein operates within cofactor biosynthesis; pyridoxine 5'-phosphate biosynthesis; pyridoxine 5'-phosphate from D-erythrose 4-phosphate: step 5/5. Catalyzes the complicated ring closure reaction between the two acyclic compounds 1-deoxy-D-xylulose-5-phosphate (DXP) and 3-amino-2-oxopropyl phosphate (1-amino-acetone-3-phosphate or AAP) to form pyridoxine 5'-phosphate (PNP) and inorganic phosphate. This Chlorobium phaeobacteroides (strain DSM 266 / SMG 266 / 2430) protein is Pyridoxine 5'-phosphate synthase.